Reading from the N-terminus, the 380-residue chain is MGLPKSFVSMSLLFFSTLLILSLAFNAKNLTQRTNDEVKAMYESWLIKYGKSYNSLGEWERRFEIFKETLRFIDEHNADTNRSYKVGLNQFADLTDEEFRSTYLGFTSGSNKTKVSNRYEPRVGQVLPSYVDWRSAGAVVDIKSQGECGGCWAFSAIATVEGINKIVTGVLISLSEQELIDCGRTQNTRGCNGGYITDGFQFIINNGGINTEENYPYTAQDGECNLDLQNEKYVTIDTYENVPYNNEWALQTAVTYQPVSVALDAAGDAFKHYSSGIFTGPCGTAIDHAVTIVGYGTEGGIDYWIVKNSWDTTWGEEGYMRILRNVGGAGTCGIATMPSYPVKYNNQNHPKPYSSLINPPAFSMSKDGPVGVDDGQRYSA.

The N-terminal stretch at 1-24 is a signal peptide; it reads MGLPKSFVSMSLLFFSTLLILSLA. Positions 25–126 are cleaved as a propeptide — activation peptide; that stretch reads FNAKNLTQRT…NRYEPRVGQV (102 aa). N-linked (GlcNAc...) asparagine glycosylation is found at asparagine 29, asparagine 81, and asparagine 111. 3 disulfides stabilise this stretch: cysteine 148–cysteine 191, cysteine 182–cysteine 224, and cysteine 282–cysteine 332. Cysteine 151 is an active-site residue. Catalysis depends on residues histidine 288 and asparagine 308.

It belongs to the peptidase C1 family. In terms of tissue distribution, fruit, present in small cells of the outer pericarp of mature fruit, but not large cells.

The enzyme catalyses Specificity close to that of papain.. Functionally, cysteine protease responsible for the cleavage of kiwellin into kissper and KiTH. This chain is Actinidain, found in Actinidia deliciosa (Kiwi).